We begin with the raw amino-acid sequence, 465 residues long: Argininosuccinate lyase (465 aa).

Belongs to the lyase 1 family. Argininosuccinate lyase subfamily.

The protein resides in the cytoplasm. The catalysed reaction is 2-(N(omega)-L-arginino)succinate = fumarate + L-arginine. It participates in amino-acid biosynthesis; L-arginine biosynthesis; L-arginine from L-ornithine and carbamoyl phosphate: step 3/3. The protein is Argininosuccinate lyase of Methylococcus capsulatus (strain ATCC 33009 / NCIMB 11132 / Bath).